Here is a 129-residue protein sequence, read N- to C-terminus: uncharacterized protein (129 aa).

C2H2-type zinc fingers lie at residues 75–99 (FVCP…YTEH) and 101–124 (KVCP…CKKH).

Essential for virus function. This is an uncharacterized protein from Saccharolobus solfataricus (Sulfolobus solfataricus).